The primary structure comprises 166 residues: Probable chemoreceptor glutamine deamidase CheD (166 aa).

This sequence belongs to the CheD family.

It catalyses the reaction L-glutaminyl-[protein] + H2O = L-glutamyl-[protein] + NH4(+). Functionally, probably deamidates glutamine residues to glutamate on methyl-accepting chemotaxis receptors (MCPs), playing an important role in chemotaxis. The protein is Probable chemoreceptor glutamine deamidase CheD of Clostridium acetobutylicum (strain ATCC 824 / DSM 792 / JCM 1419 / IAM 19013 / LMG 5710 / NBRC 13948 / NRRL B-527 / VKM B-1787 / 2291 / W).